The sequence spans 461 residues: Lysosomal dipeptide transporter MFSD1 (461 aa).

The span at 1-13 (MADREEHQGLLDG) shows a compositional bias: basic and acidic residues. Residues 1–22 (MADREEHQGLLDGDRDEDEGDK) are disordered. The Dileucine internalization motif motif lies at 10 to 11 (LL). 10 helical membrane-spanning segments follow: residues 37–57 (LLHR…SYFC), 81–101 (QLYA…GFLL), 111–131 (TVIF…GALA), 134–154 (FWLM…LAVA), 264–284 (LWLI…FIGL), 302–322 (AINS…GFLV), 331–351 (WVML…FTFW), 359–379 (LLGV…AFVV), 390–410 (FMQS…GSIL), and 416–436 (LFLE…VVLL).

This sequence belongs to the major facilitator superfamily. In terms of assembly, homodimer. Interacts with lysosomal protein GLMP (via lumenal domain); the interaction starts while both proteins are still in the endoplasmic reticulum and is required for stabilization of MFSD1 in lysosomes but has no direct effect on its targeting to lysosomes or transporter activity.

It localises to the lysosome membrane. The enzyme catalyses L-alpha-aminoacyl-L-arginine(out) = L-alpha-aminoacyl-L-arginine(in). It carries out the reaction L-arginyl-L-alpha-amino acid(out) = L-arginyl-L-alpha-amino acid(in). The catalysed reaction is L-arginyl-glycine(out) = L-arginyl-glycine(in). It catalyses the reaction L-alpha-aminoacyl-L-lysine(out) = L-alpha-aminoacyl-L-lysine(in). The enzyme catalyses L-aspartyl-L-lysine(out) = L-aspartyl-L-lysine(in). It carries out the reaction L-alanyl-L-lysine(out) = L-alanyl-L-lysine(in). The catalysed reaction is L-lysyl-L-alpha-amino acid(out) = L-lysyl-L-alpha-amino acid(in). It catalyses the reaction L-lysyl-L-alanine(out) = L-lysyl-L-alanine(in). The enzyme catalyses L-lysyl-L-lysine(out) = L-lysyl-L-lysine(in). It carries out the reaction L-lysyl-glycine(out) = L-lysyl-glycine(in). The catalysed reaction is L-alpha-aminoacyl-L-histidine(out) = L-alpha-aminoacyl-L-histidine(in). It catalyses the reaction L-histidyl-L-alpha-amino acid(out) = L-histidyl-L-alpha-amino acid(in). The enzyme catalyses L-histidyl-glycine(out) = L-histidyl-glycine(in). Its function is as follows. Lysosomal dipeptide uniporter that selectively exports lysine, arginine or histidine-containing dipeptides with a net positive charge from the lysosome lumen into the cytosol. Could play a role in a specific type of protein O-glycosylation indirectly regulating macrophages migration and tissue invasion. Also essential for liver homeostasis. This Danio rerio (Zebrafish) protein is Lysosomal dipeptide transporter MFSD1 (mfsd1).